Consider the following 415-residue polypeptide: Transcriptional regulator fogI (415 aa).

Residues 12 to 39 constitute a DNA-binding region (zn(2)-C6 fungal-type); that stretch reads CNACNESKVRCSQTKPTCARCERNKTTC. Residues 50–153 are disordered; sequence DAPPISLSHS…ILSPANLDLP (104 aa). Composition is skewed to low complexity over residues 80–102 and 123–135; these read VHIPNATATANATTTANYTSTTT and QFFAQQQPHHQQP.

It is found in the nucleus. Functionally, transcriptional regulator that postively regulates the expression of the gene cluster that mediates the biosynthesis of flavoglaucin and congeners (including aspergin, dihydroauroglaucin and auroglaucin), prenylated salicylaldehyde derivatives carrying a saturated or an unsaturated C-7 side chain. The protein is Transcriptional regulator fogI of Aspergillus ruber (strain CBS 135680).